Here is a 318-residue protein sequence, read N- to C-terminus: Isoflavone reductase (318 aa).

Residues 11-17 (GPTGAIG), Arg36, and Lys44 each bind NADP(+). Residue Lys144 is the Proton acceptor of the active site. Residue Arg148 participates in NADP(+) binding.

Belongs to the NmrA-type oxidoreductase family. Isoflavone reductase subfamily.

The enzyme catalyses (3R)-vestitone + NADP(+) = 2'-hydroxyformononetin + NADPH + 2 H(+). It functions in the pathway phytoalexin biosynthesis; pterocarpan phytoalexin biosynthesis. Reduces achiral isoflavones to chiral isoflavanones during the biosynthesis of chiral pterocarpan phytoalexins. In Cicer arietinum (Chickpea), this protein is Isoflavone reductase (IFR).